Reading from the N-terminus, the 156-residue chain is Small ribosomal subunit protein uS7 (156 aa).

It belongs to the universal ribosomal protein uS7 family. In terms of assembly, part of the 30S ribosomal subunit. Contacts proteins S9 and S11.

Its function is as follows. One of the primary rRNA binding proteins, it binds directly to 16S rRNA where it nucleates assembly of the head domain of the 30S subunit. Is located at the subunit interface close to the decoding center, probably blocks exit of the E-site tRNA. The sequence is that of Small ribosomal subunit protein uS7 from Trichormus variabilis (strain ATCC 29413 / PCC 7937) (Anabaena variabilis).